The following is a 99-amino-acid chain: Plastocyanin (99 aa).

One can recognise a Plastocyanin-like domain in the interval 1–99 (VEVLLGASDG…AGMVGQVTVN (99 aa)). Cu cation is bound by residues H37, C84, H87, and M92.

It belongs to the plastocyanin family. It depends on Cu(2+) as a cofactor.

The protein resides in the plastid. It is found in the chloroplast thylakoid membrane. Its function is as follows. Participates in electron transfer between P700 and the cytochrome b6-f complex in photosystem I. The sequence is that of Plastocyanin (PETE) from Vicia faba (Broad bean).